Consider the following 236-residue polypeptide: Ribose-5-phosphate isomerase A (236 aa).

Residues 31-34 (TGST), 88-91 (DGAD), and 101-104 (KGGG) each bind substrate. The active-site Proton acceptor is E110. A substrate-binding site is contributed by K128.

It belongs to the ribose 5-phosphate isomerase family. Homodimer.

It carries out the reaction aldehydo-D-ribose 5-phosphate = D-ribulose 5-phosphate. It participates in carbohydrate degradation; pentose phosphate pathway; D-ribose 5-phosphate from D-ribulose 5-phosphate (non-oxidative stage): step 1/1. Catalyzes the reversible conversion of ribose-5-phosphate to ribulose 5-phosphate. The polypeptide is Ribose-5-phosphate isomerase A (Thermosynechococcus vestitus (strain NIES-2133 / IAM M-273 / BP-1)).